The primary structure comprises 740 residues: Catalase-peroxidase (740 aa).

The tryptophyl-tyrosyl-methioninium (Trp-Tyr) (with M-255) cross-link spans 107–229 (WHAAGTYRIH…LAAVQMGLIY (123 aa)). Residue histidine 108 is the Proton acceptor of the active site. The tryptophyl-tyrosyl-methioninium (Tyr-Met) (with W-107) cross-link spans 229 to 255 (YVNPEGPNGNPDPMAAAVDIRETFRRM). Histidine 270 serves as a coordination point for heme b. The active-site Tryptophan radical intermediate is tryptophan 321.

Belongs to the peroxidase family. Peroxidase/catalase subfamily. As to quaternary structure, homodimer. The cofactor is heme b. In terms of processing, formation of the three residue Trp-Tyr-Met cross-link is important for the catalase, but not the peroxidase activity of the enzyme.

The enzyme catalyses H2O2 + AH2 = A + 2 H2O. The catalysed reaction is 2 H2O2 = O2 + 2 H2O. In terms of biological role, bifunctional enzyme with both catalase and broad-spectrum peroxidase activity, oxidizing various electron donors including NADP(H). Protects M.tuberculosis against toxic reactive oxygen species (ROS) including hydrogen peroxide as well as organic peroxides and thus contributes to its survival within host macrophages by countering the phagocyte oxidative burst. Also displays efficient peroxynitritase activity, which may help the bacterium to persist in macrophages. Its function is as follows. Catalyzes the oxidative activation of the antitubercular pro-drug isoniazid (INH) to generate an isonicotinoyl radical that then reacts nonenzymatically with NAD to form an isonicotinoyl-NAD adduct which inhibits InhA. This is Catalase-peroxidase from Mycobacterium tuberculosis (strain CDC 1551 / Oshkosh).